An 830-amino-acid chain; its full sequence is Receptor-like protein kinase HERK 1 (830 aa).

The signal sequence occupies residues 1 to 24 (MGIEKFETFILISTISILLCICHG). Residues 25–405 (FTPVDNYLIN…SSSSSKSNLG (381 aa)) are Extracellular-facing. Asparagine 40, asparagine 146, asparagine 217, asparagine 280, and asparagine 381 each carry an N-linked (GlcNAc...) asparagine glycan. Residues 406–426 (LIVGSAIGSLLAVVFLGSCFV) form a helical membrane-spanning segment. Residues 427 to 830 (LYKKRKRGQD…FSQLVKSEGR (404 aa)) are Cytoplasmic-facing. Residues 485–758 (FDESRNIGVG…GDVLWNLEYA (274 aa)) enclose the Protein kinase domain. ATP-binding positions include 491-499 (IGVGGFGKV) and lysine 513. The active-site Proton acceptor is the aspartate 609.

It belongs to the protein kinase superfamily. Ser/Thr protein kinase family. Post-translationally, autophosphorylated. Expressed in most vegetative tissues, including leaves, stems and roots, especially in cell elongation regions.

It localises to the cell membrane. In terms of biological role, receptor-like protein kinase required for cell elongation during vegetative growth, mostly in a brassinosteroid-(BR-) independent manner. This is Receptor-like protein kinase HERK 1 (HERK1) from Arabidopsis thaliana (Mouse-ear cress).